An 848-amino-acid chain; its full sequence is Translation initiation factor IF-2 (848 aa).

Positions 106-150 (TEQQTEAENSTNINLSEQTIKNNSHQSSSNTIETTQEKKQNDDLS) are disordered. The span at 112-139 (AENSTNINLSEQTIKNNSHQSSSNTIET) shows a compositional bias: polar residues. The region spanning 347–517 (PRAPIITVMG…LLLADMLELK (171 aa)) is the tr-type G domain. Positions 356-363 (GHVDHGKT) are G1. Position 356-363 (356-363 (GHVDHGKT)) interacts with GTP. Residues 381–385 (GITQH) are G2. The tract at residues 403–406 (DTPG) is G3. GTP contacts are provided by residues 403–407 (DTPGH) and 457–460 (NKID). The tract at residues 457-460 (NKID) is G4. The tract at residues 493 to 495 (SAL) is G5.

Belongs to the TRAFAC class translation factor GTPase superfamily. Classic translation factor GTPase family. IF-2 subfamily.

The protein localises to the cytoplasm. One of the essential components for the initiation of protein synthesis. Protects formylmethionyl-tRNA from spontaneous hydrolysis and promotes its binding to the 30S ribosomal subunits. Also involved in the hydrolysis of GTP during the formation of the 70S ribosomal complex. The sequence is that of Translation initiation factor IF-2 from Orientia tsutsugamushi (strain Boryong) (Rickettsia tsutsugamushi).